Consider the following 118-residue polypeptide: Late cornified envelope protein 1E (118 aa).

Low complexity predominate over residues 1-10 (MSCQQSQQQC). Disordered stretches follow at residues 1–23 (MSCQ…CPPK) and 84–118 (RSHR…GGCC). The segment covering 11–23 (QPPPKCTPKCPPK) has biased composition (pro residues). Low complexity predominate over residues 92 to 103 (SSDCCSQPSGGS). The segment covering 104 to 118 (SCCGGGSGQHSGGCC) has biased composition (gly residues).

It belongs to the LCE family. In terms of assembly, interacts with CYSRT1. Skin-specific. Expression was readily detected in adult trunk skin, adult arm skin, fetal skin, penal skin, vulva, esophagus and tongue. Not expressed in the cervix, rectum, lung, colon, or placenta.

Functionally, precursors of the cornified envelope of the stratum corneum. In Homo sapiens (Human), this protein is Late cornified envelope protein 1E (LCE1E).